A 378-amino-acid polypeptide reads, in one-letter code: Merozoite surface protein P41 (378 aa).

The N-terminal stretch at 1–20 is a signal peptide; that stretch reads MKGVIFCLVVLLWRQAWVSS. Residues 21–133 form the 6-Cys 1 domain; sequence KSHKCDFTKE…LKINRFLKDD (113 aa). Disulfide bonds link cysteine 25/cysteine 42, cysteine 56/cysteine 113, and cysteine 64/cysteine 111. 4 N-linked (GlcNAc...) asparagine glycosylation sites follow: asparagine 77, asparagine 149, asparagine 182, and asparagine 205. Positions 241–375 constitute a 6-Cys 2 domain; it reads VIKGCDFGNN…GESEVVLNSF (135 aa). 3 cysteine pairs are disulfide-bonded: cysteine 245–cysteine 270, cysteine 284–cysteine 348, and cysteine 297–cysteine 346. N-linked (GlcNAc...) asparagine glycosylation occurs at asparagine 351.

Heterodimer; heterodimerizes with PF12. May form an antiparallel heterodimer with PF12. In terms of processing, processed into a soluble form.

The protein localises to the cell surface. It is found in the cell membrane. The polypeptide is Merozoite surface protein P41 (PF41) (Plasmodium falciparum (isolate 3D7)).